We begin with the raw amino-acid sequence, 128 residues long: Large ribosomal subunit protein bL12 (128 aa).

This sequence belongs to the bacterial ribosomal protein bL12 family. In terms of assembly, homodimer. Part of the ribosomal stalk of the 50S ribosomal subunit. Forms a multimeric L10(L12)X complex, where L10 forms an elongated spine to which 2 to 4 L12 dimers bind in a sequential fashion. Binds GTP-bound translation factors.

Its function is as follows. Forms part of the ribosomal stalk which helps the ribosome interact with GTP-bound translation factors. Is thus essential for accurate translation. This chain is Large ribosomal subunit protein bL12, found in Acidithiobacillus ferrooxidans (strain ATCC 23270 / DSM 14882 / CIP 104768 / NCIMB 8455) (Ferrobacillus ferrooxidans (strain ATCC 23270)).